The chain runs to 200 residues: Dephospho-CoA kinase (200 aa).

The region spanning 3-200 (VLGLTGSIGM…LSGKPAAATR (198 aa)) is the DPCK domain. Residue 11–16 (GMGKTT) coordinates ATP.

Belongs to the CoaE family.

It localises to the cytoplasm. It catalyses the reaction 3'-dephospho-CoA + ATP = ADP + CoA + H(+). The protein operates within cofactor biosynthesis; coenzyme A biosynthesis; CoA from (R)-pantothenate: step 5/5. Catalyzes the phosphorylation of the 3'-hydroxyl group of dephosphocoenzyme A to form coenzyme A. This Brucella melitensis biotype 1 (strain ATCC 23456 / CCUG 17765 / NCTC 10094 / 16M) protein is Dephospho-CoA kinase.